The sequence spans 107 residues: Thioredoxin (107 aa).

Residues 2 to 107 (SVEAVVKQVD…GIRELIQANA (106 aa)) form the Thioredoxin domain. Active-site nucleophile residues include cysteine 34 and cysteine 37. A disulfide bridge connects residues cysteine 34 and cysteine 37.

The protein belongs to the thioredoxin family.

Participates in various redox reactions through the reversible oxidation of its active center dithiol to a disulfide and catalyzes dithiol-disulfide exchange reactions. The polypeptide is Thioredoxin (TRX) (Echinococcus granulosus (Hydatid tapeworm)).